Consider the following 758-residue polypeptide: 5-methyltetrahydropteroyltriglutamate--homocysteine methyltransferase (758 aa).

Residues 16–19 (RELK) and Lys-116 contribute to the 5-methyltetrahydropteroyltri-L-glutamate site. L-homocysteine contacts are provided by residues 436-438 (IGS) and Glu-489. Residues 436–438 (IGS) and Glu-489 contribute to the L-methionine site. Residues 520 to 521 (RC) and Trp-566 contribute to the 5-methyltetrahydropteroyltri-L-glutamate site. Position 604 (Asp-604) interacts with L-homocysteine. Residue Asp-604 participates in L-methionine binding. Glu-610 is a binding site for 5-methyltetrahydropteroyltri-L-glutamate. Positions 646, 648, and 670 each coordinate Zn(2+). His-699 serves as the catalytic Proton donor. Cys-731 is a Zn(2+) binding site.

Belongs to the vitamin-B12 independent methionine synthase family. It depends on Zn(2+) as a cofactor.

It catalyses the reaction 5-methyltetrahydropteroyltri-L-glutamate + L-homocysteine = tetrahydropteroyltri-L-glutamate + L-methionine. It participates in amino-acid biosynthesis; L-methionine biosynthesis via de novo pathway; L-methionine from L-homocysteine (MetE route): step 1/1. Catalyzes the transfer of a methyl group from 5-methyltetrahydrofolate to homocysteine resulting in methionine formation. In Xylella fastidiosa (strain M23), this protein is 5-methyltetrahydropteroyltriglutamate--homocysteine methyltransferase.